A 436-amino-acid chain; its full sequence is Hydrolyase ccsE (436 aa).

The active-site Nucleophile is the Ser-249.

This sequence belongs to the AB hydrolase superfamily. FUS2 hydrolase family. In terms of assembly, homodimer.

Its pathway is mycotoxin biosynthesis. Hydrolyase; part of the gene cluster that mediates the biosynthesis of a family of the mycotoxins cytochalasins E and K. The hybrid PKS-NRPS synthetase ccsA and the enoyl reductase ccsC are responsible for fusion of phenylalanine with an octaketide backbone and subsequent release of the stable tetramic acid precursor. The polyketide synthase module (PKS) of the PKS-NRPS ccsA is responsible for the synthesis of the octaketide backbone. The downstream nonribosomal peptide synthetase (NRPS) amidates the carboxyl end of the octaketide with a phenylalanine. A reductase-like domain (R) at the C-terminus catalyzes the reductive release of the polyketide-amino acid intermediate. Because ccsA lacks a designated enoylreductase (ER) domain, the required activity is provided the enoyl reductase ccsC. Upon formation of the 11-membered carbocycle-fused perhydroisoindolone intermediate, a number of oxidative steps are required to afford the final cytochalasin E and K, including two hydroxylations at C17 and C18, one alcohol oxidation at C17, one epoxidation at C6 and C7 and two Baeyer-Villiger oxidations. The oxidative modification at C17, C18 and the C6-C7 epoxidation are likely to be catalyzed by the two cytochrome P450 oxygenases ccsD and ccsG. CcsD may be responsible for the epoxidation of the C6-C7 double bond. CcsG may be responsible for the successive oxidative modifications at C17 and C18. The double Baeyer-Villiger oxidations of ketocytochalasin to precytochalasin and cytochalasin Z(16) are among the final steps leading to cytochalasin E and K and are catalyzed by ccsB. The first oxygen insertion step follows that of the classic BVMO mechanism, generating the ester precytochalasin. Release of precytochalasin into an aqueous environment can generate the shunt product iso-precytochalasin through spontaneous isomerization. Alternatively, precytochalasin can undergo further oxidation by ccsB to yield the in-line carbonate-containing cytochalasin Z(16). Cytochalasin Z(16) is a precursor to cytochalasin E and cytochalasin K, whereas iso-precytochalasin is a precursor to cytochalasin Z(17) and rosellichalasin. The hydrolyase ccsE may catalyze hydrolysis of epoxide bond in cytochalasin E to afford cytochalasin K. The function of ccsF has not been assigned but it may play a role in post-PKS-NRPS biosynthetic step, resistance or transport of cytochalasins and related PKS-NRPS products. The sequence is that of Hydrolyase ccsE from Aspergillus clavatus (strain ATCC 1007 / CBS 513.65 / DSM 816 / NCTC 3887 / NRRL 1 / QM 1276 / 107).